Consider the following 334-residue polypeptide: DNA-directed RNA polymerase subunit alpha (334 aa).

The interval 1–234 is alpha N-terminal domain (alpha-NTD); that stretch reads MQTKVNELLK…SQLAAFVELQ (234 aa). The tract at residues 248–334 is alpha C-terminal domain (alpha-CTD); that stretch reads IDPILLRPVD…LKDQDKKASG (87 aa).

Belongs to the RNA polymerase alpha chain family. In terms of assembly, homodimer. The RNAP catalytic core consists of 2 alpha, 1 beta, 1 beta' and 1 omega subunit. When a sigma factor is associated with the core the holoenzyme is formed, which can initiate transcription.

The enzyme catalyses RNA(n) + a ribonucleoside 5'-triphosphate = RNA(n+1) + diphosphate. Its function is as follows. DNA-dependent RNA polymerase catalyzes the transcription of DNA into RNA using the four ribonucleoside triphosphates as substrates. This chain is DNA-directed RNA polymerase subunit alpha, found in Thioalkalivibrio sulfidiphilus (strain HL-EbGR7).